A 317-amino-acid polypeptide reads, in one-letter code: MKVLWAALLVTFLAGCQAKVEQPVEPETEPELRQQAEGQSGQPWELALGRFWDYLRWVQTLSEQVQEELLSPQVTQELTTLMDETMKELKAYKSELEEQLSPVAEETRARLSKELQAAQARLGADMEDVRSRLVQYRSEVQAMLGQSTEELRARLASHLRKLRKRLLRDADDLQKRLAVYQAGAREGAERGVSAIRERLGPLVEQGRVRAATVGSLASQPLQERAQALGERLRARMEEMGSRTRDRLDEVKEQVAEVRAKLEEQAQQISLQAEAFQARLKSWFEPLVEDMQRQWAGLVEKVQAAVGASTAPVPSDNH.

Residues 1–18 (MKVLWAALLVTFLAGCQA) form the signal peptide. Tandem repeats lie at residues 80-101 (TLMD…EQLS), 102-123 (PVAE…ARLG), 124-145 (ADME…AMLG), 146-167 (QSTE…KRLL), 168-189 (RDAD…EGAE), 190-211 (RGVS…VRAA), 212-233 (TVGS…ERLR), and 234-255 (ARME…EQVA). The segment at 80-255 (TLMDETMKEL…RLDEVKEQVA (176 aa)) is 8 X 22 AA approximate tandem repeats. Methionine 143 carries the methionine sulfoxide modification. Phosphoserine is present on serine 147. Residues 158-168 (HLRKLRKRLLR) form an LDL and other lipoprotein receptors binding region. 162-165 (LRKR) contacts heparin. Positions 210 to 290 (AATVGSLASQ…SWFEPLVEDM (81 aa)) are lipid-binding and lipoprotein association. Residue threonine 212 is glycosylated (O-linked (GalNAc...) threonine). 229–236 (GERLRARM) contributes to the heparin binding site. A homooligomerization region spans residues 266–317 (QQISLQAEAFQARLKSWFEPLVEDMQRQWAGLVEKVQAAVGASTAPVPSDNH). The specificity for association with VLDL stretch occupies residues 278-290 (RLKSWFEPLVEDM).

The protein belongs to the apolipoprotein A1/A4/E family. Homotetramer. May interact with ABCA1; functionally associated with ABCA1 in the biogenesis of HDLs. May interact with APP/A4 amyloid-beta peptide; the interaction is extremely stable in vitro but its physiological significance is unclear. May interact with MAPT. May interact with MAP2. In the cerebrospinal fluid, interacts with secreted SORL1. Interacts with PMEL; this allows the loading of PMEL luminal fragment on ILVs to induce fibril nucleation. In terms of processing, APOE exists as multiple glycosylated and sialylated glycoforms within cells and in plasma. The extent of glycosylation and sialylation are tissue and context specific. Glycated in plasma VLDL. Post-translationally, phosphorylated by FAM20C in the extracellular medium.

The protein resides in the secreted. Its subcellular location is the extracellular space. It localises to the extracellular matrix. The protein localises to the extracellular vesicle. It is found in the endosome. The protein resides in the multivesicular body. APOE is an apolipoprotein, a protein associating with lipid particles, that mainly functions in lipoprotein-mediated lipid transport between organs via the plasma and interstitial fluids. APOE is a core component of plasma lipoproteins and is involved in their production, conversion and clearance. Apolipoproteins are amphipathic molecules that interact both with lipids of the lipoprotein particle core and the aqueous environment of the plasma. As such, APOE associates with chylomicrons, chylomicron remnants, very low density lipoproteins (VLDL) and intermediate density lipoproteins (IDL) but shows a preferential binding to high-density lipoproteins (HDL). It also binds a wide range of cellular receptors including the LDL receptor/LDLR, the LDL receptor-related proteins LRP1, LRP2 and LRP8 and the very low-density lipoprotein receptor/VLDLR that mediate the cellular uptake of the APOE-containing lipoprotein particles. Finally, APOE also has a heparin-binding activity and binds heparan-sulfate proteoglycans on the surface of cells, a property that supports the capture and the receptor-mediated uptake of APOE-containing lipoproteins by cells. A main function of APOE is to mediate lipoprotein clearance through the uptake of chylomicrons, VLDLs, and HDLs by hepatocytes. APOE is also involved in the biosynthesis by the liver of VLDLs as well as their uptake by peripheral tissues ensuring the delivery of triglycerides and energy storage in muscle, heart and adipose tissues. By participating in the lipoprotein-mediated distribution of lipids among tissues, APOE plays a critical role in plasma and tissues lipid homeostasis. APOE is also involved in two steps of reverse cholesterol transport, the HDLs-mediated transport of cholesterol from peripheral tissues to the liver, and thereby plays an important role in cholesterol homeostasis. First, it is functionally associated with ABCA1 in the biogenesis of HDLs in tissues. Second, it is enriched in circulating HDLs and mediates their uptake by hepatocytes. APOE also plays an important role in lipid transport in the central nervous system, regulating neuron survival and sprouting. This chain is Apolipoprotein E (APOE), found in Macaca nemestrina (Pig-tailed macaque).